Here is a 69-residue protein sequence, read N- to C-terminus: Large ribosomal subunit protein uL29 (69 aa).

Belongs to the universal ribosomal protein uL29 family.

In Lactococcus lactis subsp. lactis (strain IL1403) (Streptococcus lactis), this protein is Large ribosomal subunit protein uL29 (rpmC).